The following is a 281-amino-acid chain: Leukocyte antigen CD37 (281 aa).

The Cytoplasmic segment spans residues 1–17 (MSAQESCLSLIKYFLFV). The helical transmembrane segment at 18-38 (FNLFFFVLGGLIFCFGTWILI) threads the bilayer. The Extracellular segment spans residues 39–59 (DKTSFVSFVGLSFVPLQTWSK). Residues 60-74 (VLAVSGVLTMALALL) form a helical membrane-spanning segment. The Cytoplasmic segment spans residues 75-85 (GCVGALKELRC). Residues 86–111 (LLGLYFGMLLLLFATQITLGILISTQ) form a helical membrane-spanning segment. Residues 112–241 (RVRLERRVQE…QSLQKWLHNN (130 aa)) lie on the Extracellular side of the membrane. N-linked (GlcNAc...) asparagine glycosylation is found at N170, N183, and N188. The chain crosses the membrane as a helical span at residues 242 to 266 (IISIVGICLGVGLLELGFMTLSIFL). The Cytoplasmic portion of the chain corresponds to 267 to 281 (CRNLDHVYDRLARYR).

Belongs to the tetraspanin (TM4SF) family. Interacts with SCIMP. Interacts with SOCS3. Interacts with DECTIN1/CLEC7A. Post-translationally, tyrosine phosphorylated; leading to activation of downstream signaling pathways.

It is found in the cell membrane. Functionally, structural component of specialized membrane microdomains known as tetraspanin-enriched microdomains (TERMs), which act as platforms for receptor clustering and signaling. Participates thereby in diverse biological functions such as cell signal transduction, adhesion, migration and protein trafficking. Upon ligand binding, two signaling pathways are activated, one acting through phosphorylation by LYN leading to cell death or a survival pathway with activation of GSK3B. Plays an essential role for clustering of integrin ITGA4/ITGB1 and promotes its mobility in the plasma membrane of B-cells. In turn, participates in ITGA4/ITGB1 integrin-mediated antiapoptotic signaling through AKT. Also plays a role in the migration of dendritic cells and neutrophils to draining lymph nodes, as well as in their integrin-mediated adhesion. Negatively regulates IL-6 responses through direct interaction with SOCS3 thereby preventing constitutive IL-6 signaling. Alternatively, inhibition of IL-6 signaling can also occur via interaction and stabilization of DECTIN1/CLEC7A at the cell membrane to inhibit its ability to promote the production of IL-6. In Mus musculus (Mouse), this protein is Leukocyte antigen CD37 (Cd37).